The following is a 478-amino-acid chain: UDP-N-acetylmuramate--L-alanine ligase (478 aa).

An ATP-binding site is contributed by 122–128; that stretch reads GTHGKTT.

Belongs to the MurCDEF family.

It localises to the cytoplasm. The catalysed reaction is UDP-N-acetyl-alpha-D-muramate + L-alanine + ATP = UDP-N-acetyl-alpha-D-muramoyl-L-alanine + ADP + phosphate + H(+). Its pathway is cell wall biogenesis; peptidoglycan biosynthesis. Cell wall formation. The polypeptide is UDP-N-acetylmuramate--L-alanine ligase (Stenotrophomonas maltophilia (strain K279a)).